Reading from the N-terminus, the 314-residue chain is Hydroxyacyl-coenzyme A dehydrogenase, mitochondrial (314 aa).

The transit peptide at M1 to M12 directs the protein to the mitochondrion. NAD(+) is bound by residues G34–G39 and D57. Residue S73 coordinates CoA. K75 carries the N6-acetyllysine modification. Residue K80 coordinates CoA. The residue at position 80 (K80) is an N6-succinyllysine. An N6-acetyllysine; alternate mark is found at K81 and K87. N6-succinyllysine; alternate occurs at positions 81 and 87. E122 lines the NAD(+) pocket. K125 is subject to N6-acetyllysine. Residue K127 coordinates NAD(+). An N6-(2-hydroxyisobutyryl)lysine modification is found at K127. At K136 the chain carries N6-acetyllysine; alternate. Position 136 is an N6-succinyllysine; alternate (K136). NAD(+) contacts are provided by S149 and N173. A CoA-binding site is contributed by S149. K179 carries the N6-acetyllysine modification. N6-acetyllysine; alternate occurs at positions 185, 192, and 202. N6-succinyllysine; alternate occurs at positions 185, 192, and 202. K206 is modified (N6-succinyllysine). K212 and K241 each carry N6-acetyllysine; alternate. 2 positions are modified to N6-succinyllysine; alternate: K212 and K241. Position 305 (K305) interacts with NAD(+). The residue at position 312 (K312) is an N6-acetyllysine; alternate. The residue at position 312 (K312) is an N6-succinyllysine; alternate.

It belongs to the 3-hydroxyacyl-CoA dehydrogenase family. Homodimer. Interacts with GLUD1; this interaction inhibits the activation of glutamate dehydrogenase 1 (GLUD1). In terms of processing, succinylation at Lys-81, adjacent to a coenzyme A binding site. Desuccinylated by SIRT5. Expressed in liver, kidney, brain, and pancreatic islets.

It is found in the mitochondrion matrix. The protein resides in the nucleus. It localises to the cytoplasm. Its subcellular location is the cytosol. The enzyme catalyses a (3S)-3-hydroxyacyl-CoA + NAD(+) = a 3-oxoacyl-CoA + NADH + H(+). It catalyses the reaction (3S)-3-hydroxybutanoyl-CoA + NAD(+) = acetoacetyl-CoA + NADH + H(+). The catalysed reaction is (3S)-hydroxydecanoyl-CoA + NAD(+) = 3-oxodecanoyl-CoA + NADH + H(+). It carries out the reaction (3S)-hydroxyhexadecanoyl-CoA + NAD(+) = 3-oxohexadecanoyl-CoA + NADH + H(+). It participates in lipid metabolism; fatty acid beta-oxidation. Its function is as follows. Mitochondrial fatty acid beta-oxidation enzyme that catalyzes the third step of the beta-oxidation cycle for medium and short-chain 3-hydroxy fatty acyl-CoAs (C4 to C10). Plays a role in the control of insulin secretion by inhibiting the activation of glutamate dehydrogenase 1 (GLUD1), an enzyme that has an important role in regulating amino acid-induced insulin secretion. Plays a role in the maintenance of normal spermatogenesis through the reduction of fatty acid accumulation in the testes. In terms of biological role, inhibits cell proliferation. The sequence is that of Hydroxyacyl-coenzyme A dehydrogenase, mitochondrial (Hadh) from Mus musculus (Mouse).